The primary structure comprises 430 residues: 3-phosphoshikimate 1-carboxyvinyltransferase (430 aa).

Lys23, Ser24, and Arg28 together coordinate 3-phosphoshikimate. Residue Lys23 participates in phosphoenolpyruvate binding. The phosphoenolpyruvate site is built by Gly95 and Arg123. 3-phosphoshikimate-binding residues include Ser169, Gln171, Asp315, and Lys342. Gln171 contributes to the phosphoenolpyruvate binding site. The active-site Proton acceptor is Asp315. Positions 346 and 388 each coordinate phosphoenolpyruvate.

The protein belongs to the EPSP synthase family. As to quaternary structure, monomer.

It localises to the cytoplasm. It carries out the reaction 3-phosphoshikimate + phosphoenolpyruvate = 5-O-(1-carboxyvinyl)-3-phosphoshikimate + phosphate. The protein operates within metabolic intermediate biosynthesis; chorismate biosynthesis; chorismate from D-erythrose 4-phosphate and phosphoenolpyruvate: step 6/7. In terms of biological role, catalyzes the transfer of the enolpyruvyl moiety of phosphoenolpyruvate (PEP) to the 5-hydroxyl of shikimate-3-phosphate (S3P) to produce enolpyruvyl shikimate-3-phosphate and inorganic phosphate. This Streptococcus pyogenes serotype M2 (strain MGAS10270) protein is 3-phosphoshikimate 1-carboxyvinyltransferase.